We begin with the raw amino-acid sequence, 115 residues long: General stress protein 17M (115 aa).

This chain is General stress protein 17M (yflT), found in Bacillus subtilis (strain 168).